We begin with the raw amino-acid sequence, 307 residues long: Fructose-bisphosphate aldolase (307 aa).

Position 49 (Ser-49) interacts with D-glyceraldehyde 3-phosphate. Asp-82 (proton donor) is an active-site residue. Zn(2+)-binding residues include His-83, Asp-104, Glu-134, and His-180. Gly-181 lines the dihydroxyacetone phosphate pocket. Residue His-210 coordinates Zn(2+). Dihydroxyacetone phosphate is bound by residues 211 to 213 and 253 to 256; these read GAS and NTDT.

Belongs to the class II fructose-bisphosphate aldolase family. As to quaternary structure, homodimer. Requires Zn(2+) as cofactor.

It catalyses the reaction beta-D-fructose 1,6-bisphosphate = D-glyceraldehyde 3-phosphate + dihydroxyacetone phosphate. It functions in the pathway carbohydrate degradation; glycolysis; D-glyceraldehyde 3-phosphate and glycerone phosphate from D-glucose: step 4/4. Catalyzes the aldol condensation of dihydroxyacetone phosphate (DHAP or glycerone-phosphate) with glyceraldehyde 3-phosphate (G3P) to form fructose 1,6-bisphosphate (FBP) in gluconeogenesis and the reverse reaction in glycolysis. This is Fructose-bisphosphate aldolase (fba) from Helicobacter pylori (strain J99 / ATCC 700824) (Campylobacter pylori J99).